The following is a 350-amino-acid chain: Vancomycin C-type resistance protein VanC2 (350 aa).

Active-site residues include Glu-14 and Ser-187. The 203-residue stretch at 141–343 folds into the ATP-grasp domain; the sequence is HQAAAAIGVQ…YQELLQKLLV (203 aa). 171–226 provides a ligand contact to ATP; that stretch reads IQTHGFPVFFKPNEAGSSKGITKVTCVEEIASALKEAFTYCSAVLLQKNIAGVEIG. Mg(2+) contacts are provided by Asp-297, Glu-310, and Asn-312. Mn(2+)-binding residues include Asp-297, Glu-310, and Asn-312. Residue Ser-321 is part of the active site.

The protein belongs to the D-alanine--D-alanine ligase family. In terms of assembly, homodimer. The cofactor is Mg(2+). Mn(2+) serves as cofactor.

The protein localises to the cell membrane. It carries out the reaction D-serine + D-alanine + ATP = D-alanyl-D-serine + ADP + phosphate + H(+). It participates in cell wall biogenesis; peptidoglycan biosynthesis. Its activity is regulated as follows. Inhibited by D-cycloserine. Functionally, required for low-level resistance to the glycopeptide antibiotic vancomycin. D-alanine--D-alanine ligase of altered specificity, which catalyzes synthesis of D-Ala-D-Ser; produces a peptidoglycan which does not terminate in D-alanine but in D-serine, thus probably reducing affinity for vancomycin. Only insignificant catalytic synthesis of D-Ala-D-Ala in vitro. The protein is Vancomycin C-type resistance protein VanC2 of Enterococcus casseliflavus (Enterococcus flavescens).